The chain runs to 29 residues: Inorganic pyrophosphatase (29 aa).

It is found in the periplasm. It catalyses the reaction diphosphate + H2O = 2 phosphate + H(+). Its function is as follows. Inorganic pyrophosphatase is an essential enzyme for the activation of sulfate by sulfate reducing bacteria. This is a high activity pyrophosphatase. The polypeptide is Inorganic pyrophosphatase (Nitratidesulfovibrio vulgaris (strain ATCC 29579 / DSM 644 / CCUG 34227 / NCIMB 8303 / VKM B-1760 / Hildenborough) (Desulfovibrio vulgaris)).